Consider the following 215-residue polypeptide: 3-isopropylmalate dehydratase small subunit (215 aa).

This sequence belongs to the LeuD family. LeuD type 1 subfamily. Heterodimer of LeuC and LeuD.

The catalysed reaction is (2R,3S)-3-isopropylmalate = (2S)-2-isopropylmalate. The protein operates within amino-acid biosynthesis; L-leucine biosynthesis; L-leucine from 3-methyl-2-oxobutanoate: step 2/4. Its function is as follows. Catalyzes the isomerization between 2-isopropylmalate and 3-isopropylmalate, via the formation of 2-isopropylmaleate. In Acinetobacter baumannii (strain AB307-0294), this protein is 3-isopropylmalate dehydratase small subunit.